A 471-amino-acid polypeptide reads, in one-letter code: MPN domain-containing protein (471 aa).

Over residues 1 to 10 (MAAPEPLSPA) the composition is skewed to low complexity. Residues 1-63 (MAAPEPLSPA…GGGGAGAGGC (63 aa)) form a disordered region. A2 is modified (N-acetylalanine). A Phosphoserine modification is found at S8. Positions 16–29 (EAPEEDEDEAEAED) are enriched in acidic residues. The segment covering 36–63 (GAGGGRSGGGGSSVSGGGGGGGAGAGGC) has biased composition (gly residues). Residues 71–166 (TRRAVTLRVL…KYKATWLRLH (96 aa)) enclose the RAMA domain. Residues S123, S125, and W145 each contribute to the DNA site. A disordered region spans residues 170–229 (TPATAADESPASEGEEEELLMEEEEEDVLAGVSAEDKSRRPLGKSPSEPAHPEATTPGKR). Residues S178 and S181 each carry the phosphoserine modification. Positions 182–197 (EGEEEELLMEEEEEDV) are enriched in acidic residues. The region spanning 272 to 407 (VAVSSNVLFL…PESKISPFWV (136 aa)) is the MPN domain. Residues H349, H351, and D362 each coordinate Zn(2+). The JAMM motif motif lies at 349-362 (HSHPHSPALPSLQD).

The protein belongs to the peptidase M67 family. Monomer. Mainly monomoric, but when binds to dsDNA, forms homotetramer assembled into two homodimers. May interact with histones; this interaction is facilitated by dsDNA binding. Degraded following binding to N(6)-methyladenosine methylated DNA (m6A).

Probable protease. Acts as a sensor of N(6)-methyladenosine methylation on DNA (m6A): recognizes and binds m6A DNA, leading to its degradation. Binds only double strand DNA (dsDNA) in a sequence-independent manner. This is MPN domain-containing protein from Homo sapiens (Human).